The chain runs to 312 residues: Pyridoxal 5'-phosphate synthase subunit PDX1 (312 aa).

Aspartate 43 serves as a coordination point for D-ribose 5-phosphate. The Schiff-base intermediate with D-ribose 5-phosphate role is filled by lysine 100. Glycine 172 provides a ligand contact to D-ribose 5-phosphate. Arginine 184 is a D-glyceraldehyde 3-phosphate binding site. D-ribose 5-phosphate contacts are provided by residues glycine 233 and 254–255 (GS).

The protein belongs to the PdxS/SNZ family.

It carries out the reaction aldehydo-D-ribose 5-phosphate + D-glyceraldehyde 3-phosphate + L-glutamine = pyridoxal 5'-phosphate + L-glutamate + phosphate + 3 H2O + H(+). Its pathway is cofactor biosynthesis; pyridoxal 5'-phosphate biosynthesis. In terms of biological role, catalyzes the formation of pyridoxal 5'-phosphate from ribose 5-phosphate (RBP), glyceraldehyde 3-phosphate (G3P) and ammonia. The ammonia is provided by PDX2. Can also use ribulose 5-phosphate and dihydroxyacetone phosphate as substrates, resulting from enzyme-catalyzed isomerization of RBP and G3P, respectively. Also plays an indirect role in resistance to singlet oxygen-generating photosensitizers. The polypeptide is Pyridoxal 5'-phosphate synthase subunit PDX1 (PDX1) (Phaseolus vulgaris (Kidney bean)).